The following is a 363-amino-acid chain: NAD-dependent epimerase/dehydratase tndE (363 aa).

Residues 10 to 30 (GLVLITGVNGFLASHLALQLI) form a helical membrane-spanning segment. Tyrosine 176 provides a ligand contact to NADP(+).

The protein belongs to the NAD(P)-dependent epimerase/dehydratase family. Dihydroflavonol-4-reductase subfamily.

It is found in the membrane. It functions in the pathway secondary metabolite biosynthesis; terpenoid biosynthesis. Functionally, NAD-dependent epimerase/dehydratase; part of the gene cluster that mediates the biosynthesis of talaronoid C, a fusicoccane diterpenoid with an unprecedented tricyclic 5/8/6 ring system. The first step in the pathway is performed by the fusicoccadiene synthase tndC that possesses both prenyl transferase and terpene cyclase activity, converting isopentenyl diphosphate and dimethylallyl diphosphate into geranylgeranyl diphosphate (GGDP) and further converting GGDP into talarodiene, a precursor for talaronoid C. The remaining enzymes from the cluster include the cytochrome P450 monooxygenase tndB, the aldehyde reductase tndE and the alcohol dehydrogenase tndF that are involved in the conversion of talarodiene into talaronoid C. In Aspergillus flavipes, this protein is NAD-dependent epimerase/dehydratase tndE.